The primary structure comprises 375 residues: Delta(12) fatty acid dehydrogenase (375 aa).

2 consecutive transmembrane segments (helical) span residues 54–74 and 77–97; these read IIAYIFYFLADKYIPILPAPL and LAWPLYWFCQASILTGLWVIG. The Histidine box-1 motif lies at 98-102; sequence HECGH. A helical transmembrane segment spans residues 110 to 130; sequence WVDDTVGFILHSFLMTPYFSW. The short motif at 134-138 is the Histidine box-2 element; that stretch reads HRNHH. 3 helical membrane-spanning segments follow: residues 172–192, 218–238, and 242–262; these read LLIMFITFTLGFPLYLFTNIS, VLLSDLGLLAVLYGVKLAVAA, and AWVTCIYGIPVLGVFIFFDII. A Histidine box-3 motif is present at residues 308–312; the sequence is HVMHH.

The protein belongs to the fatty acid desaturase type 1 family. Requires Fe cation as cofactor. As to expression, seed.

It localises to the membrane. The catalysed reaction is a (9Z,12Z)-octadecadienoyl-containing glycerolipid + 2 Fe(II)-[cytochrome b5] + O2 + 2 H(+) = a (9Z)-octadec-9-en-12-ynoyl-containing glycerolipid + 2 Fe(III)-[cytochrome b5] + 2 H2O. It functions in the pathway lipid metabolism; polyunsaturated fatty acid biosynthesis. Changes the delta-12 double bond of linoleic acid into a triple bond in the biosynthesis of crepenynic acid. This chain is Delta(12) fatty acid dehydrogenase, found in Crepis alpina (Hawksbeard).